A 397-amino-acid chain; its full sequence is Tryptophan synthase beta chain (397 aa).

Lysine 87 bears the N6-(pyridoxal phosphate)lysine mark.

The protein belongs to the TrpB family. In terms of assembly, tetramer of two alpha and two beta chains. Pyridoxal 5'-phosphate serves as cofactor.

The enzyme catalyses (1S,2R)-1-C-(indol-3-yl)glycerol 3-phosphate + L-serine = D-glyceraldehyde 3-phosphate + L-tryptophan + H2O. Its pathway is amino-acid biosynthesis; L-tryptophan biosynthesis; L-tryptophan from chorismate: step 5/5. Functionally, the beta subunit is responsible for the synthesis of L-tryptophan from indole and L-serine. The sequence is that of Tryptophan synthase beta chain from Salmonella choleraesuis (strain SC-B67).